A 370-amino-acid chain; its full sequence is Lipoyl synthase 1, chloroplastic (370 aa).

2 disordered regions span residues 1 to 25 (MMQSSLARPLPRPPIRPACGNPVCR) and 39 to 67 (EAAPPAPAPAARRAAGPYTGRDPEVKKPA). A chloroplast-targeting transit peptide spans 1-37 (MMQSSLARPLPRPPIRPACGNPVCRSRPGSVSVARCR). Residues Cys95, Cys100, Cys106, Cys132, Cys136, Cys139, and Ser347 each coordinate [4Fe-4S] cluster. The Radical SAM core domain maps to 115-336 (GEGDGIATAT…KEYGESVGFR (222 aa)).

It belongs to the radical SAM superfamily. Lipoyl synthase family. The cofactor is [4Fe-4S] cluster.

The protein localises to the plastid. Its subcellular location is the chloroplast. It carries out the reaction [[Fe-S] cluster scaffold protein carrying a second [4Fe-4S](2+) cluster] + N(6)-octanoyl-L-lysyl-[protein] + 2 oxidized [2Fe-2S]-[ferredoxin] + 2 S-adenosyl-L-methionine + 4 H(+) = [[Fe-S] cluster scaffold protein] + N(6)-[(R)-dihydrolipoyl]-L-lysyl-[protein] + 4 Fe(3+) + 2 hydrogen sulfide + 2 5'-deoxyadenosine + 2 L-methionine + 2 reduced [2Fe-2S]-[ferredoxin]. It participates in protein modification; protein lipoylation via endogenous pathway; protein N(6)-(lipoyl)lysine from octanoyl-[acyl-carrier-protein]: step 2/2. In terms of biological role, catalyzes the radical-mediated insertion of two sulfur atoms into the C-6 and C-8 positions of the octanoyl moiety bound to the lipoyl domains of lipoate-dependent enzymes, thereby converting the octanoylated domains into lipoylated derivatives. This chain is Lipoyl synthase 1, chloroplastic, found in Oryza sativa subsp. indica (Rice).